Consider the following 135-residue polypeptide: HTH-type transcriptional regulator CueR (135 aa).

The 69-residue stretch at methionine 1 to leucine 69 folds into the HTH merR-type domain. Residues serine 4–lysine 23 constitute a DNA-binding region (H-T-H motif). Cu(+) contacts are provided by cysteine 112 and cysteine 120.

As to quaternary structure, homodimer.

The protein localises to the cytoplasm. Its function is as follows. Regulates the transcription of the copA and cueO genes. It detects cytoplasmic copper stress and activates transcription in response to increasing copper concentrations. This is HTH-type transcriptional regulator CueR (cueR) from Escherichia coli O6:H1 (strain CFT073 / ATCC 700928 / UPEC).